The chain runs to 173 residues: Ferric citrate uptake sigma factor FecI (173 aa).

The short motif at 40-52 is the Polymerase core binding element; the sequence is DIAQDTFLRVMVS. The segment at residues 139-158 is a DNA-binding region (H-T-H motif); it reads YSEIAHKLGVSISSVKKYVA.

This sequence belongs to the sigma-70 factor family. ECF subfamily. Interacts with FecR (via cytoplasmic N-terminus).

In terms of biological role, sigma factors are initiation factors that promote the attachment of RNA polymerase to specific initiation sites and are then released. This sigma factor regulates transcriptional activation of the fecABCDE operon which mediates ferric citrate transport. The chain is Ferric citrate uptake sigma factor FecI (fecI) from Escherichia coli (strain K12).